Consider the following 447-residue polypeptide: Probable glycine dehydrogenase (decarboxylating) subunit 1 (447 aa).

Belongs to the GcvP family. N-terminal subunit subfamily. As to quaternary structure, the glycine cleavage system is composed of four proteins: P, T, L and H. In this organism, the P 'protein' is a heterodimer of two subunits.

It carries out the reaction N(6)-[(R)-lipoyl]-L-lysyl-[glycine-cleavage complex H protein] + glycine + H(+) = N(6)-[(R)-S(8)-aminomethyldihydrolipoyl]-L-lysyl-[glycine-cleavage complex H protein] + CO2. Functionally, the glycine cleavage system catalyzes the degradation of glycine. The P protein binds the alpha-amino group of glycine through its pyridoxal phosphate cofactor; CO(2) is released and the remaining methylamine moiety is then transferred to the lipoamide cofactor of the H protein. The polypeptide is Probable glycine dehydrogenase (decarboxylating) subunit 1 (Macrococcus caseolyticus (strain JCSC5402) (Macrococcoides caseolyticum)).